A 354-amino-acid polypeptide reads, in one-letter code: Guanine nucleotide-binding protein G(i) subunit alpha (354 aa).

A lipid anchor (N-myristoyl glycine) is attached at G2. A lipid anchor (S-palmitoyl cysteine) is attached at C3. A G-alpha domain is found at 32 to 354 (REVKLLLLGA…KNNLKDCGLF (323 aa)). The segment at 35 to 48 (KLLLLGAGESGKST) is G1 motif. Residues 40–47 (GAGESGKS), 175–181 (LRTRVKT), 200–204 (DVGGQ), 269–272 (NKKD), and A326 contribute to the GTP site. Mg(2+) is bound by residues S47 and T181. The interval 173 to 181 (DVLRTRVKT) is G2 motif. Residues 196–205 (FKMFDVGGQR) form a G3 motif region. The segment at 265–272 (ILFLNKKD) is G4 motif. A G5 motif region spans residues 324 to 329 (TCATDT).

It belongs to the G-alpha family. G(i/o/t/z) subfamily. G proteins are composed of 3 units; alpha, beta and gamma. The alpha chain contains the guanine nucleotide binding site.

Guanine nucleotide-binding proteins (G proteins) are involved as modulators or transducers in various transmembrane signaling systems. In Planorbella trivolvis (Marsh rams-horn), this protein is Guanine nucleotide-binding protein G(i) subunit alpha.